Here is a 129-residue protein sequence, read N- to C-terminus: Large ribosomal subunit protein bL12 (129 aa).

This sequence belongs to the bacterial ribosomal protein bL12 family. In terms of assembly, homodimer. Part of the ribosomal stalk of the 50S ribosomal subunit. Forms a multimeric L10(L12)X complex, where L10 forms an elongated spine to which 2 to 4 L12 dimers bind in a sequential fashion. Binds GTP-bound translation factors.

Its function is as follows. Forms part of the ribosomal stalk which helps the ribosome interact with GTP-bound translation factors. Is thus essential for accurate translation. The sequence is that of Large ribosomal subunit protein bL12 from Micrococcus luteus (strain ATCC 4698 / DSM 20030 / JCM 1464 / CCM 169 / CCUG 5858 / IAM 1056 / NBRC 3333 / NCIMB 9278 / NCTC 2665 / VKM Ac-2230) (Micrococcus lysodeikticus).